A 267-amino-acid chain; its full sequence is tRNA pseudouridine synthase A (267 aa).

Aspartate 54 acts as the Nucleophile in catalysis. Substrate is bound at residue tyrosine 114.

This sequence belongs to the tRNA pseudouridine synthase TruA family. As to quaternary structure, homodimer.

It catalyses the reaction uridine(38/39/40) in tRNA = pseudouridine(38/39/40) in tRNA. Its function is as follows. Formation of pseudouridine at positions 38, 39 and 40 in the anticodon stem and loop of transfer RNAs. The polypeptide is tRNA pseudouridine synthase A (Tropheryma whipplei (strain Twist) (Whipple's bacillus)).